A 168-amino-acid polypeptide reads, in one-letter code: 6,7-dimethyl-8-ribityllumazine synthase (168 aa).

Residues Trp31, 65-67, and 90-92 contribute to the 5-amino-6-(D-ribitylamino)uracil site; these read SFE and NVI. 95 to 96 lines the (2S)-2-hydroxy-3-oxobutyl phosphate pocket; the sequence is ET. The Proton donor role is filled by His98. Phe123 provides a ligand contact to 5-amino-6-(D-ribitylamino)uracil. A (2S)-2-hydroxy-3-oxobutyl phosphate-binding site is contributed by Arg137.

The protein belongs to the DMRL synthase family.

The enzyme catalyses (2S)-2-hydroxy-3-oxobutyl phosphate + 5-amino-6-(D-ribitylamino)uracil = 6,7-dimethyl-8-(1-D-ribityl)lumazine + phosphate + 2 H2O + H(+). It functions in the pathway cofactor biosynthesis; riboflavin biosynthesis; riboflavin from 2-hydroxy-3-oxobutyl phosphate and 5-amino-6-(D-ribitylamino)uracil: step 1/2. Catalyzes the formation of 6,7-dimethyl-8-ribityllumazine by condensation of 5-amino-6-(D-ribitylamino)uracil with 3,4-dihydroxy-2-butanone 4-phosphate. This is the penultimate step in the biosynthesis of riboflavin. The polypeptide is 6,7-dimethyl-8-ribityllumazine synthase (Christiangramia forsetii (strain DSM 17595 / CGMCC 1.15422 / KT0803) (Gramella forsetii)).